We begin with the raw amino-acid sequence, 447 residues long: Asparagine--tRNA ligase (447 aa).

The protein belongs to the class-II aminoacyl-tRNA synthetase family. Homodimer.

Its subcellular location is the cytoplasm. It carries out the reaction tRNA(Asn) + L-asparagine + ATP = L-asparaginyl-tRNA(Asn) + AMP + diphosphate + H(+). The protein is Asparagine--tRNA ligase of Streptococcus pneumoniae serotype 4 (strain ATCC BAA-334 / TIGR4).